Reading from the N-terminus, the 240-residue chain is Small ribosomal subunit protein uS2 (240 aa).

It belongs to the universal ribosomal protein uS2 family.

The chain is Small ribosomal subunit protein uS2 from Wigglesworthia glossinidia brevipalpis.